Reading from the N-terminus, the 108-residue chain is DNA-directed RNA polymerase III subunit RPC10 (108 aa).

Positions 5, 8, 25, 28, 69, and 72 each coordinate Zn(2+). The C4-type zinc finger occupies 5 to 28 (CPGCGNGLIVEEGQRCHRFACNTC). The segment at 65-107 (TAESCPKCEHPRAYFMQLQTRSADEPMTTFYKCCNAQCGHRWR) adopts a TFIIS-type zinc-finger fold. The Hairpin motif lies at 88–89 (DE). Zn(2+) contacts are provided by Cys98 and Cys102.

It belongs to the archaeal RpoM/eukaryotic RPA12/RPB9/RPC11 RNA polymerase family. In terms of assembly, component of the RNA polymerase III complex consisting of 17 subunits: a ten-subunit horseshoe-shaped catalytic core composed of POLR3A/RPC1, POLR3B/RPC2, POLR1C/RPAC1, POLR1D/RPAC2, POLR3K/RPC10, POLR2E/RPABC1, POLR2F/RPABC2, POLR2H/RPABC3, POLR2K/RPABC4 and POLR2L/RPABC5; a mobile stalk composed of two subunits POLR3H/RPC8 and CRCP/RPC9, protruding from the core and functioning primarily in transcription initiation; and additional subunits homologous to general transcription factors of the RNA polymerase II machinery, POLR3C/RPC3-POLR3F/RPC6-POLR3G/RPC7 heterotrimer required for transcription initiation and POLR3D/RPC4-POLR3E/RPC5 heterodimer involved in both transcription initiation and termination.

The protein resides in the nucleus. Functionally, core component of RNA polymerase III (Pol III) which synthesizes small non-coding RNAs using the four ribonucleoside triphosphates as substrates. Can mediate Pol I proofreading of the nascent RNA transcript. Anchors into the Pol III active site to constantly monitor transcription fidelity, cleaves mis-incorporated 5'-ribonucleotides and restarts the transcription process. Once Pol III reaches the poly(dT) termination signal, can induce Pol III clamp opening and transcription termination. Pol III plays an important role in sensing and limiting infection by intracellular bacteria and DNA viruses. Acts as a nuclear and cytosolic DNA sensor involved in innate immune response. Can sense non-self dsDNA that serves as template for transcription into dsRNA. The non-self RNA polymerase III transcripts, such as Epstein-Barr virus-encoded RNAs (EBERs) induce type I interferon and NF-kappa-B through the RIG-I pathway. In Homo sapiens (Human), this protein is DNA-directed RNA polymerase III subunit RPC10.